The primary structure comprises 165 residues: UPF0303 protein Bcep18194_A4700 (165 aa).

It belongs to the UPF0303 family.

The protein is UPF0303 protein Bcep18194_A4700 of Burkholderia lata (strain ATCC 17760 / DSM 23089 / LMG 22485 / NCIMB 9086 / R18194 / 383).